The primary structure comprises 231 residues: Protein INCA1 (231 aa).

The tract at residues S75–E99 is interaction with CCNA1 and CCNA1/CDK2 complex; essential for CDK2 inhibitory activity. The Nuclear localization signal motif lies at R90–K95. A Phosphothreonine modification is found at T180.

Belongs to the INCA family. In terms of assembly, interacts with CCNA1. Identified in a complex with CCNA1 and CDK2. Interacts with ZNF16; the interaction inhibits INCA1 activity and induces the cell cycle process. Interacts with SPACA9. Interacts with CCNA2, CCNB1 and CCNE1. Interacts with the CCNA1/CDK2 complex. Interacts with ING5, DAZAP2, RNF26, USP15, SPOUT1, DPH7, TRIM26 and RAB5C. In terms of processing, phosphorylated when part of a complex with CCNA1 and CDK2.

Its subcellular location is the nucleus. The protein localises to the cytoplasm. Its function is as follows. Binds to CDK2-bound cyclins and inhibits the kinase activity of CDK2; binding to cyclins is critical for its function as CDK inhibitor. Inhibits cell growth and proliferation and may play a role in cell cycle control. Required for ING5-mediated regulation of S-phase progression, enhancement of Fas-induced apoptosis and inhibition of cell growth. In Mus musculus (Mouse), this protein is Protein INCA1 (Inca1).